Here is a 209-residue protein sequence, read N- to C-terminus: Holliday junction branch migration complex subunit RuvA (209 aa).

Residues 1–70 (MINYLRGQAI…EEQPLLYGFG (70 aa)) are domain I. The tract at residues 71-149 (TAPERELFRQ…AWRQLREATT (79 aa)) is domain II. The segment at 150–158 (TITAILPAA) is flexible linker. Positions 158–209 (AAILEDVQMTLLALGYSQEEIDRAMAVLSQDALFSKNTQPEDWIKGAINWLG) are domain III.

The protein belongs to the RuvA family. In terms of assembly, homotetramer. Forms an RuvA(8)-RuvB(12)-Holliday junction (HJ) complex. HJ DNA is sandwiched between 2 RuvA tetramers; dsDNA enters through RuvA and exits via RuvB. An RuvB hexamer assembles on each DNA strand where it exits the tetramer. Each RuvB hexamer is contacted by two RuvA subunits (via domain III) on 2 adjacent RuvB subunits; this complex drives branch migration. In the full resolvosome a probable DNA-RuvA(4)-RuvB(12)-RuvC(2) complex forms which resolves the HJ.

The protein resides in the cytoplasm. The RuvA-RuvB-RuvC complex processes Holliday junction (HJ) DNA during genetic recombination and DNA repair, while the RuvA-RuvB complex plays an important role in the rescue of blocked DNA replication forks via replication fork reversal (RFR). RuvA specifically binds to HJ cruciform DNA, conferring on it an open structure. The RuvB hexamer acts as an ATP-dependent pump, pulling dsDNA into and through the RuvAB complex. HJ branch migration allows RuvC to scan DNA until it finds its consensus sequence, where it cleaves and resolves the cruciform DNA. This Microcystis aeruginosa (strain NIES-843 / IAM M-2473) protein is Holliday junction branch migration complex subunit RuvA.